Here is a 514-residue protein sequence, read N- to C-terminus: MKKLKINYLFIGILTLLLAAALWPSIPWFGKTENHIAAIQARGVLRVSTIDSPLTYSVINGKKYGLDYELAQQFANYLGVKLKVTVRQNISQLFDDLDSGNADLLAAGLVYDSARVKNYQPGPMYYSVSQQLVYRVGQYRPRSLATVNENQLTIAPGHVVVNDLQRLKETKFPDLSWKVDDKKGSTTLLEEVISGKLDYTIADSVAISLFQRVHPELAVALDVTDEQPVTWFSRLDDDNTLSAALLDFFNSINEDGSLARIEEKYLGHGDDFDYVDTRSFLRAVDNVLPELEPLFKKYAKEIDWRLLAAISYQESHWDPLATSPTGVRGLMMLTKNTAQSLGLTDRTDAEQSISGGARYLEDMMAKVPETVPEDERIWFALAAYNMGYAHMLDARSLTVKTKGNPDSWTDVKQRLPLLSQKPYYSKLTYGYARGHEAYAYVENIRKYQISLVGYLQEKEKQEAEAMKLAQDYPAVSPEELNKAPFPFLSFLSQSSGYLTHSPSLLFTPQKKEEK.

A signal peptide spans 1 to 30 (MKKLKINYLFIGILTLLLAAALWPSIPWFG). The tract at residues 31–269 (KTENHIAAIQ…RIEEKYLGHG (239 aa)) is non-LT domain. The interval 270–514 (DDFDYVDTRS…LFTPQKKEEK (245 aa)) is LT domain. Glutamate 314 is a catalytic residue.

The protein in the N-terminal section; belongs to the bacterial solute-binding protein 3 family. In the C-terminal section; belongs to the transglycosylase Slt family.

Its subcellular location is the cell outer membrane. It carries out the reaction Exolytic cleavage of the (1-&gt;4)-beta-glycosidic linkage between N-acetylmuramic acid (MurNAc) and N-acetylglucosamine (GlcNAc) residues in peptidoglycan, from either the reducing or the non-reducing ends of the peptidoglycan chains, with concomitant formation of a 1,6-anhydrobond in the MurNAc residue.. Its function is as follows. Murein-degrading enzyme that degrades murein glycan strands and insoluble, high-molecular weight murein sacculi, with the concomitant formation of a 1,6-anhydromuramoyl product. Lytic transglycosylases (LTs) play an integral role in the metabolism of the peptidoglycan (PG) sacculus. Their lytic action creates space within the PG sacculus to allow for its expansion as well as for the insertion of various structures such as secretion systems and flagella. This chain is Membrane-bound lytic murein transglycosylase F, found in Salmonella paratyphi B (strain ATCC BAA-1250 / SPB7).